We begin with the raw amino-acid sequence, 394 residues long: NAD(P)H-quinone oxidoreductase subunit H (394 aa).

This sequence belongs to the complex I 49 kDa subunit family. In terms of assembly, NDH-1 can be composed of about 15 different subunits; different subcomplexes with different compositions have been identified which probably have different functions.

Its subcellular location is the cellular thylakoid membrane. It catalyses the reaction a plastoquinone + NADH + (n+1) H(+)(in) = a plastoquinol + NAD(+) + n H(+)(out). The enzyme catalyses a plastoquinone + NADPH + (n+1) H(+)(in) = a plastoquinol + NADP(+) + n H(+)(out). Its function is as follows. NDH-1 shuttles electrons from an unknown electron donor, via FMN and iron-sulfur (Fe-S) centers, to quinones in the respiratory and/or the photosynthetic chain. The immediate electron acceptor for the enzyme in this species is believed to be plastoquinone. Couples the redox reaction to proton translocation, and thus conserves the redox energy in a proton gradient. Cyanobacterial NDH-1 also plays a role in inorganic carbon-concentration. This chain is NAD(P)H-quinone oxidoreductase subunit H, found in Synechococcus sp. (strain CC9311).